Here is a 231-residue protein sequence, read N- to C-terminus: 7-cyano-7-deazaguanine synthase (231 aa).

An ATP-binding site is contributed by 8–18 (FSGGQDSTTCL). Zn(2+)-binding residues include Cys188, Cys197, Cys200, and Cys203.

Belongs to the QueC family. Zn(2+) is required as a cofactor.

The catalysed reaction is 7-carboxy-7-deazaguanine + NH4(+) + ATP = 7-cyano-7-deazaguanine + ADP + phosphate + H2O + H(+). The protein operates within purine metabolism; 7-cyano-7-deazaguanine biosynthesis. In terms of biological role, catalyzes the ATP-dependent conversion of 7-carboxy-7-deazaguanine (CDG) to 7-cyano-7-deazaguanine (preQ(0)). In Erwinia tasmaniensis (strain DSM 17950 / CFBP 7177 / CIP 109463 / NCPPB 4357 / Et1/99), this protein is 7-cyano-7-deazaguanine synthase.